The chain runs to 31 residues: Cliotide T11 (31 aa).

The segment at residues 1–31 is a cross-link (cyclopeptide (Gly-Asn)); it reads GIPCGESCVFIPCTITALLGCSCKDKVCYKN. Disulfide bonds link C4–C21, C8–C23, and C13–C28.

In terms of processing, contains 3 disulfide bonds. Post-translationally, this is a cyclic peptide. Expressed in seed but not in root, nodule, flower, stem, shoot, leaf and pod (at protein level).

Its function is as follows. Probably participates in a plant defense mechanism. The sequence is that of Cliotide T11 from Clitoria ternatea (Butterfly pea).